Here is a 384-residue protein sequence, read N- to C-terminus: Putative 8-amino-7-oxononanoate synthase (384 aa).

Residue Arg-18 participates in substrate binding. Residue 105 to 106 (GY) coordinates pyridoxal 5'-phosphate. His-130 contributes to the substrate binding site. Pyridoxal 5'-phosphate contacts are provided by residues Ser-176, 201-204 (DDAH), and 233-236 (TLSK). Lys-236 bears the N6-(pyridoxal phosphate)lysine mark. Thr-349 is a substrate binding site.

This sequence belongs to the class-II pyridoxal-phosphate-dependent aminotransferase family. BioF subfamily. As to quaternary structure, homodimer. The cofactor is pyridoxal 5'-phosphate.

The catalysed reaction is 6-carboxyhexanoyl-[ACP] + L-alanine + H(+) = (8S)-8-amino-7-oxononanoate + holo-[ACP] + CO2. The protein operates within cofactor biosynthesis; biotin biosynthesis. In terms of biological role, catalyzes the decarboxylative condensation of pimeloyl-[acyl-carrier protein] and L-alanine to produce 8-amino-7-oxononanoate (AON), [acyl-carrier protein], and carbon dioxide. This Desulfovibrio desulfuricans (strain ATCC 27774 / DSM 6949 / MB) protein is Putative 8-amino-7-oxononanoate synthase (bioF).